The following is a 254-amino-acid chain: Vesicle transport protein USE1 (254 aa).

Topologically, residues 1 to 228 are cytoplasmic; it reads MAYISENELK…AYKCGYDCFK (228 aa). A helical; Anchor for type IV membrane protein transmembrane segment spans residues 229–249; it reads VMLIVLIFMSFVSMVLMMKIF. The Lumenal segment spans residues 250 to 254; that stretch reads KKAST.

The protein belongs to the USE1 family.

Its subcellular location is the endoplasmic reticulum membrane. Functionally, SNARE that may be involved in targeting and fusion of Golgi-derived retrograde transport vesicles with the ER. This Caenorhabditis elegans protein is Vesicle transport protein USE1.